The sequence spans 1082 residues: Importin-4 (1082 aa).

Position 1 is an N-acetylmethionine (Met-1). Residues 24-90 enclose the Importin N-terminal domain; that stretch reads ATEQLQTILR…KSLVLTALQK (67 aa). HEAT repeat units lie at residues 348–385, 390–427, 431–471, 475–513, 896–933, and 937–975; these read KLCP…GAGD, RLLY…NLQP, SYSE…NLGP, PYLP…AAQD, QFVS…HGGC, and DHFP…ASPV.

This sequence belongs to the importin beta family. As to quaternary structure, found in a cytosolic complex with ASF1 (ASF1A or ASF1B) and histones H3 and H4.

The protein resides in the cytoplasm. Its subcellular location is the nucleus. Nuclear transport receptor that mediates nuclear import of proteins, such as histones, RPS3A, TNP2 and VDR. Serves as receptor for nuclear localization signals (NLS) in cargo substrates. Is thought to mediate docking of the importin/substrate complex to the nuclear pore complex (NPC) through binding to nucleoporin and the complex is subsequently translocated through the pore by an energy requiring, Ran-dependent mechanism. At the nucleoplasmic side of the NPC, Ran binds to the importin, the importin/substrate complex dissociates and importin is re-exported from the nucleus to the cytoplasm where GTP hydrolysis releases Ran. The directionality of nuclear import is thought to be conferred by an asymmetric distribution of the GTP- and GDP-bound forms of Ran between the cytoplasm and nucleus. Mediates the nuclear import of the histone H3-H4 dimer when in complex with ASF1 (ASF1A or ASF1B). Mediates the ligand-independent nuclear import of vitamin D receptor (VDR). In Mus musculus (Mouse), this protein is Importin-4 (Ipo4).